Consider the following 95-residue polypeptide: Putative regulatory protein Pmob_0099 (95 aa).

Belongs to the RemA family.

The chain is Putative regulatory protein Pmob_0099 from Petrotoga mobilis (strain DSM 10674 / SJ95).